The chain runs to 730 residues: Stonin-1 (730 aa).

Disordered regions lie at residues 1–26 (MYSTNPGSWVTFDDDPAFQSSQKRKD), 38–83 (NGLK…PLST), and 132–159 (SPHVSLPSSHSHTQPTPTLGFTEDAGPQ). 2 stretches are compositionally biased toward low complexity: residues 54–65 (PSSASSTPLSSP) and 132–143 (SPHVSLPSSHSH). Residues 269-402 (GWSFMLRIPE…KLPATAKPKN (134 aa)) enclose the SHD domain. The 304-residue stretch at 407-710 (EQEICLDIQD…ACYNIQVEIE (304 aa)) folds into the MHD domain.

The protein belongs to the Stoned B family.

It localises to the cytoplasm. The protein localises to the membrane. Its function is as follows. May be involved in the endocytic machinery. The chain is Stonin-1 (Ston1) from Mus musculus (Mouse).